Consider the following 397-residue polypeptide: Protein shisa-8 (397 aa).

The first 38 residues, 1–38 (MARAGARGLLGGRRPPGLRLALALRLALLLARPPSGRA), serve as a signal peptide directing secretion. The Extracellular segment spans residues 39–138 (GAPEAQGPAA…APRDPGRERS (100 aa)). N-linked (GlcNAc...) asparagine glycosylation is present at N75. The interval 117–136 (TGRPPARARDTAAPRDPGRE) is disordered. Basic and acidic residues predominate over residues 123–136 (RARDTAAPRDPGRE). The helical transmembrane segment at 139–159 (HTAVYAVCGVAALLVLAGIGA) threads the bilayer. At 160 to 397 (RLGLERAHSP…RTNSKTEVTV (238 aa)) the chain is on the cytoplasmic side. 2 disordered regions span residues 182-250 (LLKQ…GGSL) and 281-303 (FPALEPSPRQPPARAPRPSPDLP). Composition is skewed to pro residues over residues 188–197 (PQEPLPPTLG) and 288–303 (PRQPPARAPRPSPDLP).

The protein belongs to the shisa family. As to quaternary structure, interacts with AMPAR subunits GRIA1 and GRIA2.

The protein localises to the membrane. In terms of biological role, may regulate trafficking and current kinetics of AMPA-type glutamate receptor (AMPAR) at synapses. The sequence is that of Protein shisa-8 from Homo sapiens (Human).